A 347-amino-acid polypeptide reads, in one-letter code: uncharacterized protein (347 aa).

Zn(2+) contacts are provided by cysteine 39, histidine 65, cysteine 95, cysteine 98, cysteine 101, cysteine 109, and glutamate 152.

This sequence belongs to the zinc-containing alcohol dehydrogenase family. Zn(2+) is required as a cofactor.

This is an uncharacterized protein from Escherichia coli (strain K12).